A 357-amino-acid polypeptide reads, in one-letter code: NAD kinase 1 (357 aa).

Residue Asp68 is the Proton acceptor of the active site. NAD(+)-binding positions include 68 to 69, Arg73, 175 to 176, Arg186, Asp205, Ala240, and Gln275; these read DG and ND.

It belongs to the NAD kinase family. A divalent metal cation serves as cofactor.

It is found in the cytoplasm. The enzyme catalyses NAD(+) + ATP = ADP + NADP(+) + H(+). Functionally, involved in the regulation of the intracellular balance of NAD and NADP, and is a key enzyme in the biosynthesis of NADP. Catalyzes specifically the phosphorylation on 2'-hydroxyl of the adenosine moiety of NAD to yield NADP. This Streptomyces avermitilis (strain ATCC 31267 / DSM 46492 / JCM 5070 / NBRC 14893 / NCIMB 12804 / NRRL 8165 / MA-4680) protein is NAD kinase 1.